A 248-amino-acid chain; its full sequence is uncharacterized protein (248 aa).

A helical membrane pass occupies residues 7-25 (TIFIGGIYGLGVYIGAVAW).

The protein belongs to the methyltransferase superfamily. METL family.

It is found in the mitochondrion inner membrane. Its function is as follows. Probable methyltransferase. This is an uncharacterized protein from Schizosaccharomyces pombe (strain 972 / ATCC 24843) (Fission yeast).